We begin with the raw amino-acid sequence, 343 residues long: Holliday junction branch migration complex subunit RuvB (343 aa).

The tract at residues threonine 4–tyrosine 193 is large ATPase domain (RuvB-L). ATP is bound by residues leucine 32, arginine 33, glycine 74, lysine 77, threonine 78, threonine 79, glutamate 140 to tyrosine 142, arginine 183, tyrosine 193, and arginine 230. Threonine 78 is a binding site for Mg(2+). Residues glutamate 194–aspartate 264 are small ATPAse domain (RuvB-S). Positions alanine 267–lysine 343 are head domain (RuvB-H). 2 residues coordinate DNA: arginine 322 and arginine 327.

This sequence belongs to the RuvB family. As to quaternary structure, homohexamer. Forms an RuvA(8)-RuvB(12)-Holliday junction (HJ) complex. HJ DNA is sandwiched between 2 RuvA tetramers; dsDNA enters through RuvA and exits via RuvB. An RuvB hexamer assembles on each DNA strand where it exits the tetramer. Each RuvB hexamer is contacted by two RuvA subunits (via domain III) on 2 adjacent RuvB subunits; this complex drives branch migration. In the full resolvosome a probable DNA-RuvA(4)-RuvB(12)-RuvC(2) complex forms which resolves the HJ.

It is found in the cytoplasm. The enzyme catalyses ATP + H2O = ADP + phosphate + H(+). The RuvA-RuvB-RuvC complex processes Holliday junction (HJ) DNA during genetic recombination and DNA repair, while the RuvA-RuvB complex plays an important role in the rescue of blocked DNA replication forks via replication fork reversal (RFR). RuvA specifically binds to HJ cruciform DNA, conferring on it an open structure. The RuvB hexamer acts as an ATP-dependent pump, pulling dsDNA into and through the RuvAB complex. RuvB forms 2 homohexamers on either side of HJ DNA bound by 1 or 2 RuvA tetramers; 4 subunits per hexamer contact DNA at a time. Coordinated motions by a converter formed by DNA-disengaged RuvB subunits stimulates ATP hydrolysis and nucleotide exchange. Immobilization of the converter enables RuvB to convert the ATP-contained energy into a lever motion, pulling 2 nucleotides of DNA out of the RuvA tetramer per ATP hydrolyzed, thus driving DNA branch migration. The RuvB motors rotate together with the DNA substrate, which together with the progressing nucleotide cycle form the mechanistic basis for DNA recombination by continuous HJ branch migration. Branch migration allows RuvC to scan DNA until it finds its consensus sequence, where it cleaves and resolves cruciform DNA. This is Holliday junction branch migration complex subunit RuvB from Neisseria gonorrhoeae (strain NCCP11945).